The chain runs to 95 residues: Small ribosomal subunit protein bS20c (95 aa).

Positions 76 to 95 are disordered; that stretch reads NGSAKKAKLTKRLKEKKISL. A compositionally biased stretch (basic residues) spans 80–95; it reads KKAKLTKRLKEKKISL.

The protein belongs to the bacterial ribosomal protein bS20 family.

It is found in the plastid. The protein resides in the chloroplast. Its function is as follows. Binds directly to 16S ribosomal RNA. This Guillardia theta (Cryptophyte) protein is Small ribosomal subunit protein bS20c.